The sequence spans 356 residues: Mitogen-activated protein kinase PMK11 (356 aa).

In terms of domain architecture, Protein kinase spans 24–312 (YDIQDVVGEG…VEEALKHPYL (289 aa)). Residues 30 to 38 (VGEGAYGVV) and K53 each bind ATP.

It belongs to the protein kinase superfamily. CMGC Ser/Thr protein kinase family. MAP kinase subfamily. Mg(2+) is required as a cofactor. In terms of processing, phosphorylated by MST7.

The catalysed reaction is L-seryl-[protein] + ATP = O-phospho-L-seryl-[protein] + ADP + H(+). The enzyme catalyses L-threonyl-[protein] + ATP = O-phospho-L-threonyl-[protein] + ADP + H(+). In terms of biological role, mitogen-activated protein kinase; part of the MST11-MST7-PMK1 MAP kinase (MAPK) cascade that is essential for appressorium formation, penetration and invasive growth. Central regulator of appressorium development that acts downstream of the cAMP signal. The MST11-MST7-PMK1 MAP kinase cascade transduces signals from the cell surface sensors MDB2 and SHO1 that recognize various surface signals such as surface hydrophobicity, cutin monomers, and rice leaf waxes. Regulates expression of secreted fungal effector proteins implicated of host immune defenses, preventing reactive oxygen species generation and excessive callose deposition at plasmodesmata. Furthermore, controls the hyphal constriction required for fungal growth from one rice cell to the neighboring cell, enabling host tissue colonization and blast disease. Targets downstream of the PMK1-MAPK pathway include transcription factor MST12 and pathogenicity-related genes GAS1 and GAS2, both of which are expressed during appressorium formation, even if regulation of MST12 is not associated with expression of GAS1 or GAS2. This Pyricularia oryzae (strain 70-15 / ATCC MYA-4617 / FGSC 8958) (Rice blast fungus) protein is Mitogen-activated protein kinase PMK11.